We begin with the raw amino-acid sequence, 100 residues long: Urease subunit gamma (100 aa).

The protein belongs to the urease gamma subunit family. Heterotrimer of UreA (gamma), UreB (beta) and UreC (alpha) subunits. Three heterotrimers associate to form the active enzyme.

It is found in the cytoplasm. The enzyme catalyses urea + 2 H2O + H(+) = hydrogencarbonate + 2 NH4(+). The protein operates within nitrogen metabolism; urea degradation; CO(2) and NH(3) from urea (urease route): step 1/1. The sequence is that of Urease subunit gamma from Methylocella silvestris (strain DSM 15510 / CIP 108128 / LMG 27833 / NCIMB 13906 / BL2).